The following is a 305-amino-acid chain: Ribosomal protein L11 methyltransferase (305 aa).

Residues Thr152, Gly173, Asp195, and Asn237 each contribute to the S-adenosyl-L-methionine site.

This sequence belongs to the methyltransferase superfamily. PrmA family.

Its subcellular location is the cytoplasm. It carries out the reaction L-lysyl-[protein] + 3 S-adenosyl-L-methionine = N(6),N(6),N(6)-trimethyl-L-lysyl-[protein] + 3 S-adenosyl-L-homocysteine + 3 H(+). Methylates ribosomal protein L11. This Hamiltonella defensa subsp. Acyrthosiphon pisum (strain 5AT) protein is Ribosomal protein L11 methyltransferase.